The following is a 325-amino-acid chain: Interferon regulatory factor 1 (325 aa).

The segment at residues 5 to 113 is a DNA-binding region (IRF tryptophan pentad repeat); sequence RMRMRPWLEM…SAVRVYRMLP (109 aa). The residue at position 78 (lysine 78) is an N6-acetyllysine. The tract at residues 92–165 is disordered; that stretch reads EEVKDQSRNK…TLPDDHSSYT (74 aa). Positions 141–157 are enriched in polar residues; that stretch reads GDSSPDTFSDGLSSSTL. Residues lysine 275 and lysine 299 each participate in a glycyl lysine isopeptide (Lys-Gly) (interchain with G-Cter in SUMO) cross-link.

Belongs to the IRF family. In terms of assembly, monomer. Homodimer. Interacts with EP300. Interacts with MYD88. Interacts with PIAS3. Interacts with SPOP. In terms of processing, phosphorylated by CK2 and this positively regulates its activity. Post-translationally, sumoylation represses the transcriptional activity and displays enhanced resistance to protein degradation. Sumoylated by UBE2I/UBC9 and SUMO1. Inactivates the tumor suppressor activity. Elevated levels in tumor cells. Major site is Lys-275. Sumoylation is enhanced by PIAS3. Desumoylated by SENP1 in tumor cells and appears to compete with ubiquitination on C-terminal sites. Ubiquitinated in a SPOP-depedent manner. Appears to compete with sumoylation on C-terminal sites.

The protein resides in the nucleus. Its subcellular location is the cytoplasm. Activated by MYD88. Its function is as follows. Transcriptional regulator which displays a remarkable functional diversity in the regulation of cellular responses. Regulates transcription of IFN and IFN-inducible genes, host response to viral and bacterial infections, regulation of many genes expressed during hematopoiesis, inflammation, immune responses and cell proliferation and differentiation, regulation of the cell cycle and induction of growth arrest and programmed cell death following DNA damage. Stimulates both innate and acquired immune responses through the activation of specific target genes and can act as a transcriptional activator and repressor regulating target genes by binding to an interferon-stimulated response element (ISRE) in their promoters. Has an essentail role in IFNG-dependent immunity to mycobacteria. Competes with the transcriptional repressor ZBED2 for binding to a common consensus sequence in gene promoters. Its target genes for transcriptional activation activity include: genes involved in anti-viral response, such as IFN-alpha/beta, RIGI, TNFSF10/TRAIL, ZBP1, OAS1/2, PIAS1/GBP, EIF2AK2/PKR and RSAD2/viperin; antibacterial response, such as GBP2, GBP5 and NOS2/INOS; anti-proliferative response, such as p53/TP53, LOX and CDKN1A; apoptosis, such as BBC3/PUMA, CASP1, CASP7 and CASP8; immune response, such as IL7, IL12A/B and IL15, PTGS2/COX2 and CYBB; DNA damage responses and DNA repair, such as POLQ/POLH; MHC class I expression, such as TAP1, PSMB9/LMP2, PSME1/PA28A, PSME2/PA28B and B2M and MHC class II expression, such as CIITA; metabolic enzymes, such as ACOD1/IRG1. Represses genes involved in anti-proliferative response, such as BIRC5/survivin, CCNB1, CCNE1, CDK1, CDK2 and CDK4 and in immune response, such as FOXP3, IL4, ANXA2 and TLR4. Stimulates p53/TP53-dependent transcription through enhanced recruitment of EP300 leading to increased acetylation of p53/TP53. Plays an important role in immune response directly affecting NK maturation and activity, macrophage production of IL12, Th1 development and maturation of CD8+ T-cells. Also implicated in the differentiation and maturation of dendritic cells and in the suppression of regulatory T (Treg) cells development. Acts as a tumor suppressor and plays a role not only in antagonism of tumor cell growth but also in stimulating an immune response against tumor cells. This chain is Interferon regulatory factor 1 (IRF1), found in Homo sapiens (Human).